Consider the following 388-residue polypeptide: Succinate--CoA ligase [ADP-forming] subunit beta (388 aa).

An ATP-grasp domain is found at 9–244; that stretch reads KEILRKYNVP…LDEEDPAEIE (236 aa). ATP contacts are provided by residues Lys-46, 53 to 55, Glu-99, Ala-102, and Glu-107; that span reads GRG. Asn-199 and Asp-213 together coordinate Mg(2+). Residues Asn-264 and 321–323 contribute to the substrate site; that span reads GIM.

This sequence belongs to the succinate/malate CoA ligase beta subunit family. As to quaternary structure, heterotetramer of two alpha and two beta subunits. The cofactor is Mg(2+).

It carries out the reaction succinate + ATP + CoA = succinyl-CoA + ADP + phosphate. It catalyses the reaction GTP + succinate + CoA = succinyl-CoA + GDP + phosphate. The protein operates within carbohydrate metabolism; tricarboxylic acid cycle; succinate from succinyl-CoA (ligase route): step 1/1. Succinyl-CoA synthetase functions in the citric acid cycle (TCA), coupling the hydrolysis of succinyl-CoA to the synthesis of either ATP or GTP and thus represents the only step of substrate-level phosphorylation in the TCA. The beta subunit provides nucleotide specificity of the enzyme and binds the substrate succinate, while the binding sites for coenzyme A and phosphate are found in the alpha subunit. This chain is Succinate--CoA ligase [ADP-forming] subunit beta, found in Ralstonia pickettii (strain 12J).